Consider the following 240-residue polypeptide: Tetrahydromethanopterin S-methyltransferase subunit A (240 aa).

Over 1–216 (MADKKAPASG…DAALIAKFNS (216 aa)) the chain is Cytoplasmic. His-85 contacts 5-hydroxybenzimidazolylcob(I)amide. The chain crosses the membrane as a helical span at residues 217 to 234 (GYYNGKIQGIAIGLFLSL). At 235 to 240 (LIFSLL) the chain is on the extracellular side.

The protein belongs to the MtrA family. As to quaternary structure, the complex is composed of 8 subunits; MtrA, MtrB, MtrC, MtrD, MtrE, MtrF, MtrG and MtrH. 5-hydroxybenzimidazolylcob(I)amide serves as cofactor.

It is found in the cell membrane. It catalyses the reaction 5-methyl-5,6,7,8-tetrahydromethanopterin + coenzyme M + 2 Na(+)(in) = 5,6,7,8-tetrahydromethanopterin + methyl-coenzyme M + 2 Na(+)(out). The protein operates within one-carbon metabolism; methanogenesis from CO(2); methyl-coenzyme M from 5,10-methylene-5,6,7,8-tetrahydromethanopterin: step 2/2. Functionally, part of a complex that catalyzes the formation of methyl-coenzyme M and tetrahydromethanopterin from coenzyme M and methyl-tetrahydromethanopterin. This is an energy-conserving, sodium-ion translocating step. In Methanococcus aeolicus (strain ATCC BAA-1280 / DSM 17508 / OCM 812 / Nankai-3), this protein is Tetrahydromethanopterin S-methyltransferase subunit A.